The primary structure comprises 368 residues: RING finger protein 32 (368 aa).

The tract at residues 45–82 is disordered; sequence RKKEKKSKSLKRDATAIIDTGLRKSTEGPNMEDPEKEY. The segment at 129-171 adopts an RING-type 1; atypical zinc-finger fold; the sequence is CPICKEEFELHPQVLLSCSHVFHRACLQAFEKFTNKKTCPLCR. The region spanning 188–217 is the IQ domain; that stretch reads RVKCATRIQAYWRGYIVRKWYRNLRKIIPP. The segment at 295–358 adopts an RING-type 2; atypical zinc-finger fold; that stretch reads CSICLTPLSF…APFHVCPLCR (64 aa).

It localises to the cytoplasm. Functionally, may play a role in sperm formation. This Mus musculus (Mouse) protein is RING finger protein 32 (Rnf32).